A 275-amino-acid polypeptide reads, in one-letter code: Membrane protein insertase YidC 1 (275 aa).

The signal sequence occupies residues Met1 to Ala25. A lipid anchor (N-palmitoyl cysteine) is attached at Cys26. A lipid anchor (S-diacylglycerol cysteine) is attached at Cys26. Helical transmembrane passes span Ser58–Phe78, Tyr129–Leu149, Leu171–Leu191, Val198–Phe216, and Val222–Leu240.

It belongs to the OXA1/ALB3/YidC family. Type 2 subfamily.

The protein resides in the cell membrane. Its function is as follows. Required for the insertion and/or proper folding and/or complex formation of integral membrane proteins into the membrane. Involved in integration of membrane proteins that insert both dependently and independently of the Sec translocase complex, as well as at least some lipoproteins. In Streptococcus pyogenes serotype M1, this protein is Membrane protein insertase YidC 1.